A 572-amino-acid chain; its full sequence is Moesin (572 aa).

The FERM domain maps to 1–294 (MPRGVAVRVT…GNHELYMRRR (294 aa)). Disordered stretches follow at residues 444–508 (SQER…SYLP) and 523–544 (LQAMKDESKGEDRYDKIHQENI). A compositionally biased stretch (low complexity) spans 454–475 (AQEAAAAQHAAQLAAQREAQQL). Positions 480–502 (EGEEDEQDHELEVQQDDNDDLDD) are enriched in acidic residues. The span at 525–544 (AMKDESKGEDRYDKIHQENI) shows a compositional bias: basic and acidic residues.

Its subcellular location is the cell membrane. The protein localises to the cytoplasm. It is found in the cytoskeleton. It localises to the cell projection. Probably involved in connections of major cytoskeletal structures to the plasma membrane. The polypeptide is Moesin (Lytechinus variegatus (Green sea urchin)).